Consider the following 218-residue polypeptide: MSRHWPLFDLRITTPRLQLQLPTEELCDQLIDTILEGVHDPDRMPFSVPWTRASREDLPFNTLSHLWQQLAGFKRDDWSLPLAVLVDGRAVGVQALSSKDFPITRQVDSGSWLGLRYQGHGYGTEMRAAVLYFAFAELEAQVATSRSFVDNPASIAVSRRNGYRDNGLDRVAREGAMAEALLFRLTRDDWQRHRTVEVRVDGFDRCRPLFGPLEPPRY.

The N-acetyltransferase domain maps to D32–D188. Substrate is bound by residues Q94, S109–L113, G119–T124, S145–N151, and R160.

Dimer of dimers.

It carries out the reaction L-lysyl-[protein] + acetyl-CoA = N(6)-acetyl-L-lysyl-[protein] + CoA + H(+). It catalyses the reaction succinyl-CoA + L-lysyl-[protein] = N(6)-succinyl-L-lysyl-[protein] + CoA + H(+). Its function is as follows. Acetylates and succinylates nucleoid-associated, DNA-binding protein HupB. The polypeptide is Acetyl- and succinyl-CoA transferase MT0822 (Mycobacterium tuberculosis (strain CDC 1551 / Oshkosh)).